The primary structure comprises 304 residues: Acetyl-coenzyme A carboxylase carboxyl transferase subunit beta (304 aa).

The CoA carboxyltransferase N-terminal domain maps to 23-292 (VWTKCDSCGQ…PNPDAPREGV (270 aa)). Residues Cys27, Cys30, Cys46, and Cys49 each coordinate Zn(2+). The segment at 27–49 (CDSCGQVLYRAELERNLEVCPKC) adopts a C4-type zinc-finger fold. The tract at residues 284-304 (NPDAPREGVVVPPAPGQESEA) is disordered.

The protein belongs to the AccD/PCCB family. In terms of assembly, acetyl-CoA carboxylase is a heterohexamer composed of biotin carboxyl carrier protein (AccB), biotin carboxylase (AccC) and two subunits each of ACCase subunit alpha (AccA) and ACCase subunit beta (AccD). Zn(2+) serves as cofactor.

The protein localises to the cytoplasm. The enzyme catalyses N(6)-carboxybiotinyl-L-lysyl-[protein] + acetyl-CoA = N(6)-biotinyl-L-lysyl-[protein] + malonyl-CoA. The protein operates within lipid metabolism; malonyl-CoA biosynthesis; malonyl-CoA from acetyl-CoA: step 1/1. Its function is as follows. Component of the acetyl coenzyme A carboxylase (ACC) complex. Biotin carboxylase (BC) catalyzes the carboxylation of biotin on its carrier protein (BCCP) and then the CO(2) group is transferred by the transcarboxylase to acetyl-CoA to form malonyl-CoA. This Salmonella arizonae (strain ATCC BAA-731 / CDC346-86 / RSK2980) protein is Acetyl-coenzyme A carboxylase carboxyl transferase subunit beta.